The sequence spans 143 residues: Probable cyclic pyranopterin monophosphate synthase (143 aa).

Substrate contacts are provided by residues 61–63 and 97–98; these read YCH and ME. Asp112 is a catalytic residue.

It belongs to the MoaC family. Homohexamer; trimer of dimers.

It carries out the reaction (8S)-3',8-cyclo-7,8-dihydroguanosine 5'-triphosphate = cyclic pyranopterin phosphate + diphosphate. It participates in cofactor biosynthesis; molybdopterin biosynthesis. In terms of biological role, catalyzes the conversion of (8S)-3',8-cyclo-7,8-dihydroguanosine 5'-triphosphate to cyclic pyranopterin monophosphate (cPMP). The protein is Probable cyclic pyranopterin monophosphate synthase of Thermoplasma acidophilum (strain ATCC 25905 / DSM 1728 / JCM 9062 / NBRC 15155 / AMRC-C165).